A 160-amino-acid polypeptide reads, in one-letter code: Small ribosomal subunit protein uS19v (160 aa).

It belongs to the universal ribosomal protein uS19 family.

Its subcellular location is the cytoplasm. The chain is Small ribosomal subunit protein uS19v (RPS15F) from Arabidopsis thaliana (Mouse-ear cress).